The chain runs to 156 residues: ATP synthase subunit b (156 aa).

Residues 7-27 (LIGELIAFTVFVLFCMKFVWP) traverse the membrane as a helical segment.

Belongs to the ATPase B chain family. As to quaternary structure, F-type ATPases have 2 components, F(1) - the catalytic core - and F(0) - the membrane proton channel. F(1) has five subunits: alpha(3), beta(3), gamma(1), delta(1), epsilon(1). F(0) has three main subunits: a(1), b(2) and c(10-14). The alpha and beta chains form an alternating ring which encloses part of the gamma chain. F(1) is attached to F(0) by a central stalk formed by the gamma and epsilon chains, while a peripheral stalk is formed by the delta and b chains.

It is found in the cell inner membrane. Its function is as follows. F(1)F(0) ATP synthase produces ATP from ADP in the presence of a proton or sodium gradient. F-type ATPases consist of two structural domains, F(1) containing the extramembraneous catalytic core and F(0) containing the membrane proton channel, linked together by a central stalk and a peripheral stalk. During catalysis, ATP synthesis in the catalytic domain of F(1) is coupled via a rotary mechanism of the central stalk subunits to proton translocation. Functionally, component of the F(0) channel, it forms part of the peripheral stalk, linking F(1) to F(0). This Pseudoalteromonas translucida (strain TAC 125) protein is ATP synthase subunit b.